Reading from the N-terminus, the 87-residue chain is Large ribosomal subunit protein bL27 (87 aa).

It belongs to the bacterial ribosomal protein bL27 family.

The polypeptide is Large ribosomal subunit protein bL27 (Stenotrophomonas maltophilia (strain K279a)).